Reading from the N-terminus, the 210-residue chain is Thymidylate kinase (210 aa).

Gly11–Ser18 is an ATP binding site.

The protein belongs to the thymidylate kinase family.

The catalysed reaction is dTMP + ATP = dTDP + ADP. Phosphorylation of dTMP to form dTDP in both de novo and salvage pathways of dTTP synthesis. In Vibrio campbellii (strain ATCC BAA-1116), this protein is Thymidylate kinase.